We begin with the raw amino-acid sequence, 188 residues long: Elongation factor P (188 aa).

An N6-(3,6-diaminohexanoyl)-5-hydroxylysine modification is found at K34.

Belongs to the elongation factor P family. Post-translationally, may be beta-lysylated on the epsilon-amino group of Lys-34 by the combined action of EpmA and EpmB, and then hydroxylated on the C5 position of the same residue by EpmC (if this protein is present). Lysylation is critical for the stimulatory effect of EF-P on peptide-bond formation. The lysylation moiety may extend toward the peptidyltransferase center and stabilize the terminal 3-CCA end of the tRNA. Hydroxylation of the C5 position on Lys-34 may allow additional potential stabilizing hydrogen-bond interactions with the P-tRNA.

It is found in the cytoplasm. Its pathway is protein biosynthesis; polypeptide chain elongation. Its function is as follows. Involved in peptide bond synthesis. Alleviates ribosome stalling that occurs when 3 or more consecutive Pro residues or the sequence PPG is present in a protein, possibly by augmenting the peptidyl transferase activity of the ribosome. Modification of Lys-34 is required for alleviation. The protein is Elongation factor P of Aliivibrio fischeri (strain ATCC 700601 / ES114) (Vibrio fischeri).